We begin with the raw amino-acid sequence, 121 residues long: Acidic phospholipase A2 PLA-2 (121 aa).

7 cysteine pairs are disulfide-bonded: C26–C115, C28–C44, C43–C95, C49–C121, C50–C88, C57–C81, and C75–C86. Residues Y27, G29, and G31 each coordinate Ca(2+). Residue H47 is part of the active site. Residue D48 coordinates Ca(2+). D89 is an active-site residue.

This sequence belongs to the phospholipase A2 family. Group II subfamily. D49 sub-subfamily. It depends on Ca(2+) as a cofactor. Expressed by the venom gland.

Its subcellular location is the secreted. The enzyme catalyses a 1,2-diacyl-sn-glycero-3-phosphocholine + H2O = a 1-acyl-sn-glycero-3-phosphocholine + a fatty acid + H(+). Functionally, PLA2 catalyzes the calcium-dependent hydrolysis of the 2-acyl groups in 3-sn-phosphoglycerides. In Eristicophis macmahoni (Leaf-nosed viper), this protein is Acidic phospholipase A2 PLA-2.